Here is a 240-residue protein sequence, read N- to C-terminus: Phosphatidylserine decarboxylase proenzyme (240 aa).

Serine 209 (schiff-base intermediate with substrate; via pyruvic acid) is an active-site residue. Serine 209 carries the post-translational modification Pyruvic acid (Ser); by autocatalysis.

It belongs to the phosphatidylserine decarboxylase family. PSD-A subfamily. Heterodimer of a large membrane-associated beta subunit and a small pyruvoyl-containing alpha subunit. Requires pyruvate as cofactor. Is synthesized initially as an inactive proenzyme. Formation of the active enzyme involves a self-maturation process in which the active site pyruvoyl group is generated from an internal serine residue via an autocatalytic post-translational modification. Two non-identical subunits are generated from the proenzyme in this reaction, and the pyruvate is formed at the N-terminus of the alpha chain, which is derived from the carboxyl end of the proenzyme. The post-translation cleavage follows an unusual pathway, termed non-hydrolytic serinolysis, in which the side chain hydroxyl group of the serine supplies its oxygen atom to form the C-terminus of the beta chain, while the remainder of the serine residue undergoes an oxidative deamination to produce ammonia and the pyruvoyl prosthetic group on the alpha chain.

Its subcellular location is the cell membrane. It catalyses the reaction a 1,2-diacyl-sn-glycero-3-phospho-L-serine + H(+) = a 1,2-diacyl-sn-glycero-3-phosphoethanolamine + CO2. The protein operates within phospholipid metabolism; phosphatidylethanolamine biosynthesis; phosphatidylethanolamine from CDP-diacylglycerol: step 2/2. Functionally, catalyzes the formation of phosphatidylethanolamine (PtdEtn) from phosphatidylserine (PtdSer). The polypeptide is Phosphatidylserine decarboxylase proenzyme (Mycobacterium marinum (strain ATCC BAA-535 / M)).